The chain runs to 296 residues: 4-diphosphocytidyl-2-C-methyl-D-erythritol kinase (296 aa).

Lys19 is a catalytic residue. 102–112 (PMGAGLGGGSS) provides a ligand contact to ATP. Asp144 is an active-site residue.

This sequence belongs to the GHMP kinase family. IspE subfamily.

The catalysed reaction is 4-CDP-2-C-methyl-D-erythritol + ATP = 4-CDP-2-C-methyl-D-erythritol 2-phosphate + ADP + H(+). The protein operates within isoprenoid biosynthesis; isopentenyl diphosphate biosynthesis via DXP pathway; isopentenyl diphosphate from 1-deoxy-D-xylulose 5-phosphate: step 3/6. Functionally, catalyzes the phosphorylation of the position 2 hydroxy group of 4-diphosphocytidyl-2C-methyl-D-erythritol. This chain is 4-diphosphocytidyl-2-C-methyl-D-erythritol kinase, found in Burkholderia pseudomallei (strain 1710b).